We begin with the raw amino-acid sequence, 299 residues long: Protoheme IX farnesyltransferase (299 aa).

The next 9 membrane-spanning stretches (helical) occupy residues 27 to 47, 53 to 73, 97 to 117, 121 to 141, 149 to 169, 175 to 195, 222 to 242, 244 to 264, and 273 to 293; these read VVAL…HEHF, LIAL…NHLI, FNVL…LMLW, LTAY…TLYL, IVIA…SITG, AWLL…ALAI, ILLY…VGMA, YLYL…AIKL, and AIEM…ALLL.

The protein belongs to the UbiA prenyltransferase family. Protoheme IX farnesyltransferase subfamily.

Its subcellular location is the cell inner membrane. It carries out the reaction heme b + (2E,6E)-farnesyl diphosphate + H2O = Fe(II)-heme o + diphosphate. The protein operates within porphyrin-containing compound metabolism; heme O biosynthesis; heme O from protoheme: step 1/1. Functionally, converts heme B (protoheme IX) to heme O by substitution of the vinyl group on carbon 2 of heme B porphyrin ring with a hydroxyethyl farnesyl side group. The sequence is that of Protoheme IX farnesyltransferase from Vibrio vulnificus (strain YJ016).